The chain runs to 893 residues: TBC domain-containing protein kinase-like protein (893 aa).

Residues 1 to 274 (MFPLRDTEMG…EELMHDHLFS (274 aa)) enclose the Protein kinase domain. Residues 466–651 (DIPPLLRGIT…HLWDTLLLGN (186 aa)) form the Rab-GAP TBC domain. The 100-residue stretch at 790–889 (SKPKLLVVDI…IKPTGLLTVP (100 aa)) folds into the Rhodanese domain.

Belongs to the protein kinase superfamily. Component of the FERRY complex.

The protein localises to the cytoplasm. Its subcellular location is the cytoskeleton. It is found in the spindle. The protein resides in the midbody. It localises to the early endosome. In terms of biological role, component of the FERRY complex (Five-subunit Endosomal Rab5 and RNA/ribosome intermediary). The FERRY complex directly interacts with mRNAs and RAB5A, and functions as a RAB5A effector involved in the localization and the distribution of specific mRNAs most likely by mediating their endosomal transport. The complex recruits mRNAs and ribosomes to early endosomes through direct mRNA-interaction. Also involved in the modulation of mTOR signaling and expression of mTOR complex components. Involved in the control of actin-cytoskeleton organization. This chain is TBC domain-containing protein kinase-like protein, found in Gallus gallus (Chicken).